Reading from the N-terminus, the 187-residue chain is Dihydrofolate reductase type A10 (187 aa).

The region spanning 2–174 is the DHFR domain; sequence NISLIFANEL…YSLSIDKFVR (173 aa).

It belongs to the dihydrofolate reductase family. As to quaternary structure, homodimer.

It catalyses the reaction (6S)-5,6,7,8-tetrahydrofolate + NADP(+) = 7,8-dihydrofolate + NADPH + H(+). It participates in cofactor biosynthesis; tetrahydrofolate biosynthesis; 5,6,7,8-tetrahydrofolate from 7,8-dihydrofolate: step 1/1. Functionally, key enzyme in folate metabolism. Catalyzes an essential reaction for de novo glycine and purine synthesis, and for DNA precursor synthesis. The polypeptide is Dihydrofolate reductase type A10 (dfrA10) (Escherichia coli).